Here is a 63-residue protein sequence, read N- to C-terminus: Large ribosomal subunit protein bL32 (63 aa).

This sequence belongs to the bacterial ribosomal protein bL32 family.

The protein is Large ribosomal subunit protein bL32 of Lacticaseibacillus paracasei (strain ATCC 334 / BCRC 17002 / CCUG 31169 / CIP 107868 / KCTC 3260 / NRRL B-441) (Lactobacillus paracasei).